The following is an 866-amino-acid chain: Probable LRR receptor-like serine/threonine-protein kinase At5g16900 (866 aa).

The first 20 residues, M1–A20, serve as a signal peptide directing secretion. The Extracellular portion of the chain corresponds to Q21–V515. N-linked (GlcNAc...) asparagine glycans are attached at residues N137, N176, N230, N251, N331, N404, N409, and N436. LRR repeat units follow at residues R415–T438, Q439–M461, and S463–R485. N-linked (GlcNAc...) asparagine glycans are attached at residues N468 and N505. A helical membrane pass occupies residues I516–F536. Residues I537–S866 are Cytoplasmic-facing. Residue T564 is modified to Phosphothreonine. In terms of domain architecture, Protein kinase spans N573 to I846. Residues I579 to V587 and K601 each bind ATP. Y646 is subject to Phosphotyrosine. Catalysis depends on D698, which acts as the Proton acceptor. At S732 the chain carries Phosphoserine. 2 positions are modified to phosphothreonine: T733 and T738. At Y746 the chain carries Phosphotyrosine.

This sequence belongs to the protein kinase superfamily. Ser/Thr protein kinase family.

It is found in the membrane. The catalysed reaction is L-seryl-[protein] + ATP = O-phospho-L-seryl-[protein] + ADP + H(+). It carries out the reaction L-threonyl-[protein] + ATP = O-phospho-L-threonyl-[protein] + ADP + H(+). The protein is Probable LRR receptor-like serine/threonine-protein kinase At5g16900 of Arabidopsis thaliana (Mouse-ear cress).